The following is a 293-amino-acid chain: N-acetylneuraminate lyase (293 aa).

Residues Ser-47 and Thr-48 each contribute to the aceneuramate site. Tyr-136 (proton donor) is an active-site residue. The active-site Schiff-base intermediate with substrate is Lys-164. Aceneuramate contacts are provided by Thr-166, Gly-188, Asp-190, Glu-191, and Ser-207.

The protein belongs to the DapA family. NanA subfamily. As to quaternary structure, homotetramer.

Its subcellular location is the cytoplasm. It carries out the reaction aceneuramate = aldehydo-N-acetyl-D-mannosamine + pyruvate. It participates in amino-sugar metabolism; N-acetylneuraminate degradation; D-fructose 6-phosphate from N-acetylneuraminate: step 1/5. Its function is as follows. Catalyzes the reversible aldol cleavage of N-acetylneuraminic acid (sialic acid; Neu5Ac) to form pyruvate and N-acetylmannosamine (ManNAc) via a Schiff base intermediate. The polypeptide is N-acetylneuraminate lyase (Haemophilus influenzae (strain ATCC 51907 / DSM 11121 / KW20 / Rd)).